Consider the following 628-residue polypeptide: FAD-linked oxidoreductase hmp9 (628 aa).

The N-terminal stretch at 1 to 29 is a signal peptide; the sequence is MFCIIRAQLLLLLHLLVLALLLVGTVCNA. The interval 34 to 53 is disordered; the sequence is GHPSELEPLALKRGGSPRDD. N-linked (GlcNAc...) asparagine glycans are attached at residues Asn-80 and Asn-133. The region spanning 152 to 337 is the FAD-binding PCMH-type domain; that stretch reads LGQLPVYAID…LKTKIKAYPN (186 aa). N-linked (GlcNAc...) asparagine glycosylation is present at Asn-356.

It belongs to the oxygen-dependent FAD-linked oxidoreductase family.

The protein operates within secondary metabolite biosynthesis. Functionally, FAD-linked oxidoreductase; part of the gene cluster that mediates the biosynthesis of hypothemycin, a resorcylic acid lactone (RAL) that irreversibly inhibits a subset of protein kinases with a conserved cysteine in the ATP binding site such as human ERK2. The first step is performed by both PKSs hmp3 and hmp8 and leads to the production of 7',8'-dehydrozearalenol (DHZ). The highly reducing PKS hpm8 synthesizes the reduced hexaketide (7S,11S,2E,8E)-7,11-dihydroxy-dodeca-2,8-dienoate, which is transferred downstream to the non-reducing PKS hpm3. Hpm3 then extends the reduced hexaketide to a nonaketide, after which regioselective cyclization and macrolactonization affords DHZ. The next step is the conversion of DHZ into aigialomycin C and is performed by the O-methyltransferase hmp5, the FAD-binding monooxygenase hmp7, and the cytochrome P450 monooxygenase hmp1. The wide substrate tolerance of the hmp5 and hmp7 implies that the reactions from DHZ to aigialomycin C can occur in any order. The steps from aigialomycin C to hypothemycin are less well established. The FAD-linked oxidoreductase hmp9 presumably catalyzes oxidation of the C-6' hydroxyl to a ketone. The timing of this oxidation is important, since the resulting enone functional group is a Michael acceptor that can react spontaneously with glutathione, an abundant metabolite in fungal cells. The glutathione S-transferase hmp2 catalyzes cis-trans isomerization of the 7',8' double bond with equilibrium favoring the trans isomer. The hpm6-encoded transporter might preferentially pump hypothemycin out of the cell relative to the trans isomer aigialomycin A. The cis-to-trans isomerization may be coupled with C-4' hydroxylation, since all known hypothemycin analogs containing the enone functional group also have hydroxyl groups at both C-4' and C-5'. The polypeptide is FAD-linked oxidoreductase hmp9 (Hypomyces subiculosus (Nectria subiculosa)).